The sequence spans 154 residues: Myoglobin-2 (154 aa).

One can recognise a Globin domain in the interval 2–148; that stretch reads GLSDGEWQLV…FRKDIATKYK (147 aa). Position 65 (His-65) interacts with nitrite. An O2-binding site is contributed by His-65. His-94 lines the heme b pocket.

It belongs to the globin family. Monomeric.

It localises to the cytoplasm. The protein localises to the sarcoplasm. The catalysed reaction is Fe(III)-heme b-[protein] + nitric oxide + H2O = Fe(II)-heme b-[protein] + nitrite + 2 H(+). It catalyses the reaction H2O2 + AH2 = A + 2 H2O. In terms of biological role, monomeric heme protein which primary function is to store oxygen and facilitate its diffusion within muscle tissues. Reversibly binds oxygen through a pentacoordinated heme iron and enables its timely and efficient release as needed during periods of heightened demand. Depending on the oxidative conditions of tissues and cells, and in addition to its ability to bind oxygen, it also has a nitrite reductase activity whereby it regulates the production of bioactive nitric oxide. Under stress conditions, like hypoxia and anoxia, it also protects cells against reactive oxygen species thanks to its pseudoperoxidase activity. This chain is Myoglobin-2 (MB2), found in Stenella attenuata (Pantropical spotted dolphin).